We begin with the raw amino-acid sequence, 580 residues long: Laccase-20 (580 aa).

An N-terminal signal peptide occupies residues 1–23 (MVASLLCTVAVAVLAVAAVGGEA). 2 Plastocyanin-like domains span residues 31–147 (VVHE…PRDG) and 156–310 (KDVP…YTGV). 2 N-linked (GlcNAc...) asparagine glycosylation sites follow: Asn-36 and Asn-42. His-81 and His-83 together coordinate Cu cation. Asn-115 is a glycosylation site (N-linked (GlcNAc...) asparagine). Residues His-126 and His-128 each contribute to the Cu cation site. N-linked (GlcNAc...) asparagine glycosylation is found at Asn-200, Asn-339, Asn-373, Asn-392, Asn-399, Asn-429, and Asn-460. Positions 419–561 (DFPVRPPRPY…ATAFIVEDGP (143 aa)) constitute a Plastocyanin-like 3 domain. Cu cation contacts are provided by Asn-478, His-481, His-483, His-540, Cys-541, His-542, His-546, and Met-551. Residues 560 to 580 (GPTPETSLPPPPPEFKRCDAS) are disordered.

The protein belongs to the multicopper oxidase family. Cu cation serves as cofactor.

It localises to the secreted. It is found in the extracellular space. The protein localises to the apoplast. The enzyme catalyses 4 hydroquinone + O2 = 4 benzosemiquinone + 2 H2O. In terms of biological role, lignin degradation and detoxification of lignin-derived products. This chain is Laccase-20 (LAC20), found in Oryza sativa subsp. japonica (Rice).